Consider the following 136-residue polypeptide: Organic hydroperoxide resistance protein OhrB (136 aa).

It belongs to the OsmC/Ohr family.

Involved in organic hydroperoxide resistance. This chain is Organic hydroperoxide resistance protein OhrB (ohrB), found in Bacillus subtilis (strain 168).